The chain runs to 1217 residues: Valine--tRNA ligase (1217 aa).

The GST C-terminal domain occupies Asn-27–Val-155. The 'HIGH' region motif lies at Pro-293–His-303. Positions Lys-809–Ser-813 match the 'KMSKS' region motif. Lys-812 contributes to the ATP binding site.

The protein belongs to the class-I aminoacyl-tRNA synthetase family.

The enzyme catalyses tRNA(Val) + L-valine + ATP = L-valyl-tRNA(Val) + AMP + diphosphate. This Takifugu rubripes (Japanese pufferfish) protein is Valine--tRNA ligase (vars1).